The primary structure comprises 108 residues: Ig kappa chain V-V region NQ5-89.4 (108 aa).

The segment at 1–23 is framework-1; that stretch reads DIQMTQTTSSLSASLGHRVTITC. The cysteines at positions 23 and 88 are disulfide-linked. A complementarity-determining-1 region spans residues 24–34; it reads SASQDISNYLN. Residues 35–49 are framework-2; the sequence is WYQQKPDGTVKLLIY. The complementarity-determining-2 stretch occupies residues 50 to 56; it reads YTSRLHS. Residues 57–88 form a framework-3 region; it reads GVPSRFSGSGSATDYSLTITNLQQEDXATYXC. The interval 89–97 is complementarity-determining-3; sequence QQGNTLPYT. The tract at residues 98-107 is framework-4; it reads FGGGTKLXIK.

Anti-2-phenyl oxazolone (PHOX) Antibody. The sequence is that of Ig kappa chain V-V region NQ5-89.4 from Mus musculus (Mouse).